Here is a 107-residue protein sequence, read N- to C-terminus: High mobility group protein HMG-I/HMG-Y (107 aa).

Over residues 1 to 13 (MSESVSKSSQPLA) the composition is skewed to polar residues. The tract at residues 1 to 107 (MSESVSKSSQ…ISQESSEEEQ (107 aa)) is disordered. An N-acetylserine modification is found at serine 2. Lysine 7 bears the N6-acetyllysine mark. Serine 8 bears the ADP-ribosylserine mark. Serine 9 is subject to ADP-ribosylserine; alternate. A Phosphoserine; alternate modification is found at serine 9. At lysine 15 the chain carries N6-acetyllysine; alternate. Lysine 15 participates in a covalent cross-link: Glycyl lysine isopeptide (Lys-Gly) (interchain with G-Cter in SUMO2); alternate. The segment covering 15 to 24 (KQEKDGTEKR) has biased composition (basic and acidic residues). Positions 21–31 (TEKRGRGRPRK) form a DNA-binding region, a.T hook 1. Arginine 26 carries the post-translational modification Asymmetric dimethylarginine; alternate. At arginine 26 the chain carries Omega-N-methylarginine; alternate. Arginine 26 bears the Symmetric dimethylarginine; alternate mark. Serine 36 bears the Phosphoserine; by HIPK2 and CDC2 mark. Threonine 39 bears the Phosphothreonine mark. Residues serine 44 and serine 49 each carry the phosphoserine modification. Phosphothreonine; by HIPK2 and CDC2 is present on threonine 53. DNA-binding regions (a.T hook) lie at residues 53–63 (TPKRPRGRPKG) and 78–89 (TPGRKPRGRPKK). The tract at residues 53-77 (TPKRPRGRPKGSKNKGTAKTRKVTT) is interaction with HIPK2. The segment covering 55–74 (KRPRGRPKGSKNKGTAKTRK) has biased composition (basic residues). Asymmetric dimethylarginine; by PRMT6; alternate occurs at positions 58 and 60. Arginine 58 and arginine 60 each carry omega-N-methylarginine; by PRMT6; alternate. Phosphothreonine; by HIPK2 and CDC2 is present on threonine 78. The span at 93–107 (EEEEGISQESSEEEQ) shows a compositional bias: acidic residues. A phosphoserine mark is found at serine 99, serine 102, and serine 103.

This sequence belongs to the HMGA family. In terms of assembly, interacts with HIPK2. In terms of processing, isoforms HMG-I and HMG-Y can be phosphorylated by HIPK2. Phosphorylation may modulate DNA-binding affinity. Methylation at Arg-58 is mutually exclusive with methylation at Arg-60.

The protein resides in the nucleus. The protein localises to the chromosome. Its function is as follows. HMG-I/Y bind preferentially to the minor groove of A+T rich regions in double-stranded DNA. It is suggested that these proteins could function in nucleosome phasing and in the 3'-end processing of mRNA transcripts. They are also involved in the transcription regulation of genes containing, or in close proximity to A+T-rich regions. The polypeptide is High mobility group protein HMG-I/HMG-Y (Hmga1) (Rattus norvegicus (Rat)).